Consider the following 453-residue polypeptide: Phenylalanine-4-hydroxylase (453 aa).

Ala2 carries the post-translational modification N-acetylalanine. Ser16 is subject to Phosphoserine; by PKA. Positions 36–114 constitute an ACT domain; it reads SLIFSLKEEV…TVHELSRDKE (79 aa). Positions 285, 290, and 330 each coordinate Fe cation.

The protein belongs to the biopterin-dependent aromatic amino acid hydroxylase family. As to quaternary structure, homodimer and homotetramer. It depends on Fe(2+) as a cofactor. Post-translationally, phosphorylation at Ser-16 increases basal activity and facilitates activation by the substrate phenylalanine.

The catalysed reaction is (6R)-L-erythro-5,6,7,8-tetrahydrobiopterin + L-phenylalanine + O2 = (4aS,6R)-4a-hydroxy-L-erythro-5,6,7,8-tetrahydrobiopterin + L-tyrosine. It functions in the pathway amino-acid degradation; L-phenylalanine degradation; acetoacetate and fumarate from L-phenylalanine: step 1/6. Its activity is regulated as follows. N-terminal region of PAH is thought to contain allosteric binding sites for phenylalanine and to constitute an 'inhibitory' domain that regulates the activity of a catalytic domain in the C-terminal portion of the molecule. In terms of biological role, catalyzes the hydroxylation of L-phenylalanine to L-tyrosine. The chain is Phenylalanine-4-hydroxylase (Pah) from Rattus norvegicus (Rat).